Reading from the N-terminus, the 137-residue chain is Large ribosomal subunit protein uL16 (137 aa).

It belongs to the universal ribosomal protein uL16 family. Part of the 50S ribosomal subunit.

Functionally, binds 23S rRNA and is also seen to make contacts with the A and possibly P site tRNAs. This Pseudomonas fluorescens (strain Pf0-1) protein is Large ribosomal subunit protein uL16.